The chain runs to 280 residues: 3-methyl-2-oxobutanoate hydroxymethyltransferase (280 aa).

2 residues coordinate Mg(2+): aspartate 60 and aspartate 99. Residues 60 to 61 (DS), aspartate 99, and lysine 129 contribute to the 3-methyl-2-oxobutanoate site. Residue glutamate 131 participates in Mg(2+) binding. Residue glutamate 198 is the Proton acceptor of the active site.

Belongs to the PanB family. As to quaternary structure, homodecamer; pentamer of dimers. The cofactor is Mg(2+).

The protein resides in the cytoplasm. It catalyses the reaction 3-methyl-2-oxobutanoate + (6R)-5,10-methylene-5,6,7,8-tetrahydrofolate + H2O = 2-dehydropantoate + (6S)-5,6,7,8-tetrahydrofolate. It participates in cofactor biosynthesis; (R)-pantothenate biosynthesis; (R)-pantoate from 3-methyl-2-oxobutanoate: step 1/2. Its function is as follows. Catalyzes the reversible reaction in which hydroxymethyl group from 5,10-methylenetetrahydrofolate is transferred onto alpha-ketoisovalerate to form ketopantoate. In Thermobifida fusca (strain YX), this protein is 3-methyl-2-oxobutanoate hydroxymethyltransferase.